The sequence spans 86 residues: Protein Tat (86 aa).

Residues 1-21 (MDPVDPNIEPWNHPGSQPKTA) form a disordered region. The tract at residues 1–24 (MDPVDPNIEPWNHPGSQPKTACNR) is interaction with human CREBBP. Residues 1-48 (MDPVDPNIEPWNHPGSQPKTACNRCHCKKCCYHCQVCFITKGLGISYG) are transactivation. Zn(2+) is bound by residues Cys22, Cys25, and Cys27. Residues 22–37 (CNRCHCKKCCYHCQVC) form a cysteine-rich region. Position 28 is an N6-acetyllysine; by host PCAF (Lys28). Residues Cys30, His33, Cys34, and Cys37 each coordinate Zn(2+). The segment at 38-48 (FITKGLGISYG) is core. Residues 47-86 (YGRKKRRQRRRPSQGGQTHQDPIPKQPSSQPRGDPTGPKE) are disordered. Positions 48-58 (GRKKRRQRRRP) are enriched in basic residues. The Nuclear localization signal, RNA-binding (TAR), and protein transduction signature appears at 49–57 (RKKRRQRRR). The segment at 49 to 86 (RKKRRQRRRPSQGGQTHQDPIPKQPSSQPRGDPTGPKE) is interaction with the host capping enzyme RNGTT. Lys50 and Lys51 each carry N6-acetyllysine; by host EP300 and GCN5L2. Arg52 and Arg53 each carry asymmetric dimethylarginine; by host PRMT6. Residues 60–77 (QGGQTHQDPIPKQPSSQP) are compositionally biased toward polar residues. Lys71 is covalently cross-linked (Glycyl lysine isopeptide (Lys-Gly) (interchain with G-Cter in ubiquitin)). Residues 78–80 (RGD) carry the Cell attachment site motif.

It belongs to the lentiviruses Tat family. As to quaternary structure, interacts with host CCNT1. Associates with the P-TEFb complex composed at least of Tat, P-TEFb (CDK9 and CCNT1), TAR RNA, RNA Pol II. Recruits the HATs CREBBP, TAF1/TFIID, EP300, PCAF and GCN5L2. Interacts with host KAT5/Tip60; this interaction targets the latter to degradation. Interacts with the host deacetylase SIRT1. Interacts with host capping enzyme RNGTT; this interaction stimulates RNGTT. Binds to host KDR, and to the host integrins ITGAV/ITGB3 and ITGA5/ITGB1. Interacts with host KPNB1/importin beta-1 without previous binding to KPNA1/importin alpha-1. Interacts with EIF2AK2. Interacts with host nucleosome assembly protein NAP1L1; this interaction may be required for the transport of Tat within the nucleus, since the two proteins interact at the nuclear rim. Interacts with host C1QBP/SF2P32; this interaction involves lysine-acetylated Tat. Interacts with the host chemokine receptors CCR2, CCR3 and CXCR4. Interacts with host DPP4/CD26; this interaction may trigger an anti-proliferative effect. Interacts with host LDLR. Interacts with the host extracellular matrix metalloproteinase MMP1. Interacts with host PRMT6; this interaction mediates Tat's methylation. Interacts with, and is ubiquitinated by MDM2/Hdm2. Interacts with host PSMC3 and HTATIP2. Interacts with STAB1; this interaction may overcome SATB1-mediated repression of IL2 and IL2RA (interleukin) in T cells by binding to the same domain than HDAC1. Interacts (when acetylated) with human CDK13, thereby increasing HIV-1 mRNA splicing and promoting the production of the doubly spliced HIV-1 protein Nef. Interacts with host TBP; this interaction modulates the activity of transcriptional pre-initiation complex. Interacts with host RELA. Interacts with host PLSCR1; this interaction negatively regulates Tat transactivation activity by altering its subcellular distribution. In terms of processing, asymmetrical arginine methylation by host PRMT6 seems to diminish the transactivation capacity of Tat and affects the interaction with host CCNT1. Post-translationally, acetylation by EP300, CREBBP, GCN5L2/GCN5 and PCAF regulates the transactivation activity of Tat. EP300-mediated acetylation of Lys-50 promotes dissociation of Tat from the TAR RNA through the competitive binding to PCAF's bromodomain. In addition, the non-acetylated Tat's N-terminus can also interact with PCAF. PCAF-mediated acetylation of Lys-28 enhances Tat's binding to CCNT1. Lys-50 is deacetylated by SIRT1. Polyubiquitination by host MDM2 does not target Tat to degradation, but activates its transactivation function and fosters interaction with CCNT1 and TAR RNA. In terms of processing, phosphorylated by EIF2AK2 on serine and threonine residues adjacent to the basic region important for TAR RNA binding and function. Phosphorylation of Tat by EIF2AK2 is dependent on the prior activation of EIF2AK2 by dsRNA.

The protein localises to the host nucleus. Its subcellular location is the host nucleolus. The protein resides in the host cytoplasm. It is found in the secreted. Transcriptional activator that increases RNA Pol II processivity, thereby increasing the level of full-length viral transcripts. Recognizes a hairpin structure at the 5'-LTR of the nascent viral mRNAs referred to as the transactivation responsive RNA element (TAR) and recruits the cyclin T1-CDK9 complex (P-TEFb complex) that will in turn hyperphosphorylate the RNA polymerase II to allow efficient elongation. The CDK9 component of P-TEFb and other Tat-activated kinases hyperphosphorylate the C-terminus of RNA Pol II that becomes stabilized and much more processive. Other factors such as HTATSF1/Tat-SF1, SUPT5H/SPT5, and HTATIP2 are also important for Tat's function. Besides its effect on RNA Pol II processivity, Tat induces chromatin remodeling of proviral genes by recruiting the histone acetyltransferases (HATs) CREBBP, EP300 and PCAF to the chromatin. This also contributes to the increase in proviral transcription rate, especially when the provirus integrates in transcriptionally silent region of the host genome. To ensure maximal activation of the LTR, Tat mediates nuclear translocation of NF-kappa-B by interacting with host RELA. Through its interaction with host TBP, Tat may also modulate transcription initiation. Tat can reactivate a latently infected cell by penetrating in it and transactivating its LTR promoter. In the cytoplasm, Tat is thought to act as a translational activator of HIV-1 mRNAs. Functionally, extracellular circulating Tat can be endocytosed by surrounding uninfected cells via the binding to several surface receptors such as CD26, CXCR4, heparan sulfate proteoglycans (HSPG) or LDLR. Neurons are rarely infected, but they internalize Tat via their LDLR. Through its interaction with nuclear HATs, Tat is potentially able to control the acetylation-dependent cellular gene expression. Modulates the expression of many cellular genes involved in cell survival, proliferation or in coding for cytokines or cytokine receptors. Tat plays a role in T-cell and neurons apoptosis. Tat induced neurotoxicity and apoptosis probably contribute to neuroAIDS. Circulating Tat also acts as a chemokine-like and/or growth factor-like molecule that binds to specific receptors on the surface of the cells, affecting many cellular pathways. In the vascular system, Tat binds to ITGAV/ITGB3 and ITGA5/ITGB1 integrins dimers at the surface of endothelial cells and competes with bFGF for heparin-binding sites, leading to an excess of soluble bFGF. The polypeptide is Protein Tat (Human immunodeficiency virus type 1 group M subtype D (isolate Z2/CDC-Z34) (HIV-1)).